Consider the following 174-residue polypeptide: uncharacterized protein (174 aa).

2 helical membrane-spanning segments follow: residues 29–51 (FAVE…GFWY) and 66–83 (VIVI…VTKI).

The protein localises to the cell membrane. This is an uncharacterized protein from Bacillus subtilis (strain 168).